The following is a 549-amino-acid chain: Nucleoporin nup61 (549 aa).

The segment covering 1 to 32 has biased composition (basic and acidic residues); it reads MSKRGADHQLTKDQDDSDDDRHGPVEVPKEAS. Disordered regions lie at residues 1-57, 133-193, and 207-438; these read MSKR…VSSP, IEKK…GFSA, and FTPK…NEDS. Ser17 carries the phosphoserine modification. Over residues 40–50 the composition is skewed to basic residues; the sequence is KIAKPKSRKRP. Over residues 141 to 165 the composition is skewed to polar residues; that stretch reads QPTSNAVVSEVNPQQQKSQDSSSFV. 2 stretches are compositionally biased toward basic and acidic residues: residues 170-180 and 217-228; these read ASSEKEDKEKP and SATEAEAKEKET. A compositionally biased stretch (low complexity) spans 229-244; it reads SSNQTATGTAATTTNQ. 2 stretches are compositionally biased toward basic and acidic residues: residues 282-310 and 328-339; these read ASKE…KSEN and KPIKFDTPEKKF. A Phosphoserine modification is found at Ser347. Basic and acidic residues predominate over residues 407 to 421; the sequence is SEQEEKENGNDETRS. One can recognise a RanBD1 domain in the interval 416–549; the sequence is NDETRSNDSL…NEKKVSKSEN (134 aa).

The protein localises to the nucleus. Its subcellular location is the nuclear pore complex. Functionally, functions as a component of the nuclear pore complex (NPC). NPC components, collectively referred to as nucleoporins (NUPs), can play the role of both NPC structural components and of docking or interaction partners for transiently associated nuclear transport factors. Active directional transport is assured by both, a Phe-Gly (FG) repeat affinity gradient for these transport factors across the NPC and a transport cofactor concentration gradient across the nuclear envelope. May play a role in mitotic spindle formation and/or function. The sequence is that of Nucleoporin nup61 (nup61) from Schizosaccharomyces pombe (strain 972 / ATCC 24843) (Fission yeast).